Here is a 642-residue protein sequence, read N- to C-terminus: Extracellular metalloproteinase 4 (642 aa).

Positions 1–18 (MHGLLLAGLLALPLNVLA) are cleaved as a signal peptide. The propeptide occupies 19–253 (HPTESHSSGI…VHSVVDYVSA (235 aa)). The segment covering 49–60 (SDSLTGQDGQSF) has biased composition (polar residues). Residues 49-72 (SDSLTGQDGQSFTASSADADTSSG) are disordered. Residues 61-71 (TASSADADTSS) are compositionally biased toward low complexity. The N-linked (GlcNAc...) asparagine glycan is linked to N419. H436 is a binding site for Zn(2+). E437 is a catalytic residue. Residue H440 coordinates Zn(2+). Residues N509 and N602 are each glycosylated (N-linked (GlcNAc...) asparagine).

Belongs to the peptidase M36 family. Requires Zn(2+) as cofactor.

It is found in the secreted. Functionally, secreted metalloproteinase that allows assimilation of proteinaceous substrates and probably acts as a virulence factor. The chain is Extracellular metalloproteinase 4 (MEP4) from Arthroderma gypseum (strain ATCC MYA-4604 / CBS 118893) (Microsporum gypseum).